A 195-amino-acid polypeptide reads, in one-letter code: MSEKTSTVTIHYGNQRFPVAVNLNETLSELIDDLLETTEISEKKVKLFYAGKRLKDKKASLSKLGLKNHSKILCIRPHKQQRGSKEKDTVEPAPKAEAENPVFSRISGEIKAIDQYVDKELSPMYDNYVNKPSNDPKQKNKQKLMISELLLQQLLKLDGVDVLGSEKLRFERKQLVSKIQKMLDHVDQTSQEVAA.

Positions 6–72 constitute a Ubiquitin-like domain; that stretch reads STVTIHYGNQ…KLGLKNHSKI (67 aa). Residues 78–98 form a disordered region; sequence HKQQRGSKEKDTVEPAPKAEA. A compositionally biased stretch (basic and acidic residues) spans 83–98; that stretch reads GSKEKDTVEPAPKAEA. A BAG domain is found at 109 to 190; the sequence is EIKAIDQYVD…KMLDHVDQTS (82 aa).

As to quaternary structure, binds to the ATPase domain of HSP70/HSC chaperones.

In terms of biological role, inhibits the chaperone activity of HSP70/HSC70 by promoting substrate release. In Schizosaccharomyces pombe (strain 972 / ATCC 24843) (Fission yeast), this protein is BAG family molecular chaperone regulator 1A (bag101).